A 137-amino-acid polypeptide reads, in one-letter code: Large ribosomal subunit protein uL16 (137 aa).

Belongs to the universal ribosomal protein uL16 family. As to quaternary structure, part of the 50S ribosomal subunit.

Functionally, binds 23S rRNA and is also seen to make contacts with the A and possibly P site tRNAs. This chain is Large ribosomal subunit protein uL16, found in Streptococcus suis (strain 98HAH33).